A 283-amino-acid polypeptide reads, in one-letter code: MPIILENVSFFYSKNTPLETAALKDVNLRIEKGEFVGILGEKGAGKSTLIKLFNGLLRPESGKVTVDGLSPFSKEVKRKVGMLFQQAADQLFCRTVHEEIAFGPRNFGYSKKETEERVFEALEAVSFDRSMLLRDPFSLSGGEMQRVALAGALALRPDYLVLDEPITGLDPAGKKEILETLKKIKDQGTAVITVTHNLKGFFPLLEKIVLVREGRISFQGSREEYLEAKNVPLPPVTSMMRELKARGLPVNPAIFTVEEALEEILRVKSRLEKEKTEKWSETD.

The ABC transporter domain maps to 3-238; sequence IILENVSFFY…KNVPLPPVTS (236 aa). Position 40 to 47 (40 to 47) interacts with ATP; sequence GEKGAGKS.

This sequence belongs to the ABC transporter superfamily.

The protein localises to the cell membrane. Its function is as follows. Probably part of an ABC transporter complex. Responsible for energy coupling to the transport system. In Methanosarcina acetivorans (strain ATCC 35395 / DSM 2834 / JCM 12185 / C2A), this protein is Putative ABC transporter ATP-binding protein MA_4342.